The following is a 620-amino-acid chain: 1-deoxy-D-xylulose-5-phosphate synthase (620 aa).

Thiamine diphosphate is bound by residues His-75 and 116 to 118 (AHS). Asp-147 provides a ligand contact to Mg(2+). Thiamine diphosphate contacts are provided by residues 148–149 (GA), Asn-177, Tyr-284, and Glu-366. Position 177 (Asn-177) interacts with Mg(2+).

Belongs to the transketolase family. DXPS subfamily. As to quaternary structure, homodimer. It depends on Mg(2+) as a cofactor. The cofactor is thiamine diphosphate.

The catalysed reaction is D-glyceraldehyde 3-phosphate + pyruvate + H(+) = 1-deoxy-D-xylulose 5-phosphate + CO2. Its pathway is metabolic intermediate biosynthesis; 1-deoxy-D-xylulose 5-phosphate biosynthesis; 1-deoxy-D-xylulose 5-phosphate from D-glyceraldehyde 3-phosphate and pyruvate: step 1/1. Catalyzes the acyloin condensation reaction between C atoms 2 and 3 of pyruvate and glyceraldehyde 3-phosphate to yield 1-deoxy-D-xylulose-5-phosphate (DXP). In Bordetella avium (strain 197N), this protein is 1-deoxy-D-xylulose-5-phosphate synthase.